The chain runs to 179 residues: Large ribosomal subunit protein uL5 (179 aa).

It belongs to the universal ribosomal protein uL5 family. In terms of assembly, part of the 50S ribosomal subunit; part of the 5S rRNA/L5/L18/L25 subcomplex. Contacts the 5S rRNA and the P site tRNA. Forms a bridge to the 30S subunit in the 70S ribosome.

This is one of the proteins that bind and probably mediate the attachment of the 5S RNA into the large ribosomal subunit, where it forms part of the central protuberance. In the 70S ribosome it contacts protein S13 of the 30S subunit (bridge B1b), connecting the 2 subunits; this bridge is implicated in subunit movement. Contacts the P site tRNA; the 5S rRNA and some of its associated proteins might help stabilize positioning of ribosome-bound tRNAs. The sequence is that of Large ribosomal subunit protein uL5 from Halorhodospira halophila (strain DSM 244 / SL1) (Ectothiorhodospira halophila (strain DSM 244 / SL1)).